The chain runs to 136 residues: uncharacterized protein (136 aa).

An N-terminal signal peptide occupies residues 1 to 19; sequence MMTAAKRLGLYSALRACSA. The helical transmembrane segment at 75 to 97 threads the bilayer; it reads FWFSHTCLVFGSNTILFASLNSF.

It is found in the membrane. This is an uncharacterized protein from Saccharomyces cerevisiae (strain ATCC 204508 / S288c) (Baker's yeast).